The following is a 65-amino-acid chain: Protein translocase subunit SecE (65 aa).

The Cytoplasmic segment spans residues 1 to 27 (MEKLKEFLKGVRDELKRVVWPSRELVV). A helical membrane pass occupies residues 28-59 (KATISVIIFSLAIGVYLWILDLTFTKIISFIL). Topologically, residues 60–65 (SLRGSL) are periplasmic.

The protein belongs to the SecE/SEC61-gamma family. In terms of assembly, component of the Sec protein translocase complex. Heterotrimer consisting of SecY, SecE and SecG subunits. The heterotrimers can form oligomers, although 1 heterotrimer is thought to be able to translocate proteins. Interacts with SecDF, and other proteins may be involved. The channel interacts with SecA via subunit SecY.

It is found in the cell inner membrane. Essential subunit of the protein translocation channel SecYEG. Clamps together the 2 halves of SecY. May contact the channel plug during translocation. The chain is Protein translocase subunit SecE from Aquifex aeolicus (strain VF5).